We begin with the raw amino-acid sequence, 836 residues long: MAGLNCGVSIALLGVLLLGAARLPRGAEAFEIALPRESNITVLIKLGTPTLLAKPCYIVISKRHITMLSIKSGERIVFTFSCQSPENHFVIEIQKNIDCMSGPCPFGEVQLQPSTSLLPTLNRTFIWDVKAHKSIGLELQFSIPRLRQIGPGESCPDGVTHSISGRIDATVVRIGTFCSNGTVSRIKMQEGVKMALHLPWFHPRNVSGFSIANRSSIKRLCIIESVFEGEGSATLMSANYPEGFPEDELMTWQFVVPAHLRASVSFLNFNLSNCERKEERVEYYIPGSTTNPEVFKLEDKQPGNMAGNFNLSLQGCDQDAQSPGILRLQFQVLVQHPQNESNKIYVVDLSNERAMSLTIEPRPVKQSRKFVPGCFVCLESRTCSSNLTLTSGSKHKISFLCDDLTRLWMNVEKTISCTDHRYCQRKSYSLQVPSDILHLPVELHDFSWKLLVPKDRLSLVLVPAQKLQQHTHEKPCNTSFSYLVASAIPSQDLYFGSFCPGGSIKQIQVKQNISVTLRTFAPSFQQEASRQGLTVSFIPYFKEEGVFTVTPDTKSKVYLRTPNWDRGLPSLTSVSWNISVPRDQVACLTFFKERSGVVCQTGRAFMIIQEQRTRAEEIFSLDEDVLPKPSFHHHSFWVNISNCSPTSGKQLDLLFSVTLTPRTVDLTVILIAAVGGGVLLLSALGLIICCVKKKKKKTNKGPAVGIYNDNINTEMPRQPKKFQKGRKDNDSHVYAVIEDTMVYGHLLQDSSGSFLQPEVDTYRPFQGTMGVCPPSPPTICSRAPTAKLATEEPPPRSPPESESEPYTFSHPNNGDVSSKDTDIPLLNTQEPMEPAE.

The first 29 residues, 1 to 29 (MAGLNCGVSIALLGVLLLGAARLPRGAEA), serve as a signal peptide directing secretion. Over 30–667 (FEIALPRESN…TLTPRTVDLT (638 aa)) the chain is Extracellular. Residues N39, N122, N180, N205, N270, N310, and N386 are each glycosylated (N-linked (GlcNAc...) asparagine). The CUB domain occupies 417 to 544 (CTDHRYCQRK…VSFIPYFKEE (128 aa)). C476 and C499 form a disulfide bridge. Residues 668 to 688 (VILIAAVGGGVLLLSALGLII) traverse the membrane as a helical segment. Topologically, residues 689–836 (CCVKKKKKKT…NTQEPMEPAE (148 aa)) are cytoplasmic. A Phosphotyrosine modification is found at Y734. The disordered stretch occupies residues 776 to 836 (PPTICSRAPT…NTQEPMEPAE (61 aa)).

In terms of assembly, interacts with CDH2/N-cadherin, CDH3/P-cadherin, SDC1/syndecan-1, SDC4/syndecan-4 and the serine protease ST14/MT-SP1. Also interacts with SRC and PRKCG/protein kinase C gamma. Post-translationally, phosphorylated on tyrosine by kinases of the SRC family such as SRC and YES as well as by the protein kinase C gamma/PRKCG. Dephosphorylated by phosphotyrosine phosphatases. Also phosphorylated by suramin, a heparin analog. Tyrosine phosphorylated in response to dissociation of integrin alpha-6 beta-4 from laminin-5. In terms of processing, N-glycosylated. A soluble form may also be produced by proteolytic cleavage at the cell surface (shedding). Another peptide of 80 kDa (p80) is present in cultured keratinocytes probably due to tryptic cleavage at an unidentified site on its N-terminal side. Converted to p80 by plasmin, a trypsin-like protease. As to expression, highly expressed in mitotic cells with low expression during interphase. Detected at highest levels in skeletal muscle and colon with lower levels in kidney, small intestine, placenta and lung. Up-regulated in a number of human tumor cell lines, as well as in colorectal cancer, breast carcinoma and lung cancer. Also expressed in cells with phenotypes reminiscent of mesenchymal stem cells and neural stem cells.

The protein resides in the cell membrane. It is found in the secreted. In terms of biological role, may be involved in cell adhesion and cell matrix association. May play a role in the regulation of anchorage versus migration or proliferation versus differentiation via its phosphorylation. May be a novel marker for leukemia diagnosis and for immature hematopoietic stem cell subsets. Belongs to the tetraspanin web involved in tumor progression and metastasis. The polypeptide is CUB domain-containing protein 1 (CDCP1) (Homo sapiens (Human)).